Reading from the N-terminus, the 209-residue chain is Thymidylate kinase (209 aa).

Position 10–17 (10–17 (GIDGCGKS)) interacts with ATP.

Belongs to the thymidylate kinase family.

The catalysed reaction is dTMP + ATP = dTDP + ADP. Phosphorylation of dTMP to form dTDP in both de novo and salvage pathways of dTTP synthesis. The polypeptide is Thymidylate kinase (Synechococcus sp. (strain CC9902)).